The sequence spans 121 residues: Ribonuclease P protein component (121 aa).

This sequence belongs to the RnpA family. In terms of assembly, consists of a catalytic RNA component (M1 or rnpB) and a protein subunit.

The catalysed reaction is Endonucleolytic cleavage of RNA, removing 5'-extranucleotides from tRNA precursor.. Functionally, RNaseP catalyzes the removal of the 5'-leader sequence from pre-tRNA to produce the mature 5'-terminus. It can also cleave other RNA substrates such as 4.5S RNA. The protein component plays an auxiliary but essential role in vivo by binding to the 5'-leader sequence and broadening the substrate specificity of the ribozyme. The polypeptide is Ribonuclease P protein component (Desulfosudis oleivorans (strain DSM 6200 / JCM 39069 / Hxd3) (Desulfococcus oleovorans)).